Consider the following 334-residue polypeptide: N-acetylmuramate/N-acetylglucosamine kinase (334 aa).

Belongs to the kinase AmgK family.

It carries out the reaction N-acetyl-D-muramate + ATP = N-acetyl-alpha-D-muramate 1-phosphate + ADP + H(+). The enzyme catalyses N-acetyl-D-glucosamine + ATP = N-acetyl-alpha-D-glucosamine 1-phosphate + ADP + H(+). The protein operates within cell wall biogenesis; peptidoglycan recycling. Functionally, sugar kinase that catalyzes the ATP-dependent phosphorylation of N-acetylmuramate (MurNAc) and N-acetylglucosamine (GlcNAc) at its C1 hydroxyl group, leading to MurNAc alpha-1P and GlcNAc alpha-1P, respectively. Is likely involved in peptidoglycan recycling as part of a cell wall recycling pathway that bypasses de novo biosynthesis of the peptidoglycan precursor UDP-MurNAc. Is able to complement the fosfomycin sensitivity phenotype of a P.putida mutant lacking amgK. The sequence is that of N-acetylmuramate/N-acetylglucosamine kinase from Neisseria meningitidis serogroup B (strain ATCC BAA-335 / MC58).